Consider the following 96-residue polypeptide: SPbeta prophage-derived uncharacterized protein YosV (96 aa).

The sequence is that of SPbeta prophage-derived uncharacterized protein YosV (yosV) from Bacillus subtilis (strain 168).